We begin with the raw amino-acid sequence, 236 residues long: Purine nucleoside phosphorylase DeoD-type (236 aa).

Position 5 (H5) interacts with a purine D-ribonucleoside. Residues G21, R25, R44, and R88–T91 each bind phosphate. A purine D-ribonucleoside-binding positions include E180–E182 and S204–D205. D205 acts as the Proton donor in catalysis.

It belongs to the PNP/UDP phosphorylase family. Homohexamer; trimer of homodimers.

It carries out the reaction a purine D-ribonucleoside + phosphate = a purine nucleobase + alpha-D-ribose 1-phosphate. The enzyme catalyses a purine 2'-deoxy-D-ribonucleoside + phosphate = a purine nucleobase + 2-deoxy-alpha-D-ribose 1-phosphate. Functionally, catalyzes the reversible phosphorolytic breakdown of the N-glycosidic bond in the beta-(deoxy)ribonucleoside molecules, with the formation of the corresponding free purine bases and pentose-1-phosphate. The sequence is that of Purine nucleoside phosphorylase DeoD-type from Shewanella loihica (strain ATCC BAA-1088 / PV-4).